The sequence spans 214 residues: Adenylate kinase (214 aa).

10-15 is a binding site for ATP; sequence GAGKGT. Residues 30 to 59 are NMP; that stretch reads STGDMLRAAIKAGTELGKQAKTLMDAGQLV. Residues threonine 31, arginine 36, 57-59, 85-88, and glutamine 92 each bind AMP; these read QLV and GFPR. The interval 122-159 is LID; sequence GRRVHPASGRSYHVVYNPPKVEGKDDVTGEDLIIRADD. Residues arginine 123 and 132 to 133 each bind ATP; that span reads SY. AMP is bound by residues arginine 156 and arginine 167. Position 200 (glutamine 200) interacts with ATP.

The protein belongs to the adenylate kinase family. Monomer.

It is found in the cytoplasm. It catalyses the reaction AMP + ATP = 2 ADP. Its pathway is purine metabolism; AMP biosynthesis via salvage pathway; AMP from ADP: step 1/1. Its function is as follows. Catalyzes the reversible transfer of the terminal phosphate group between ATP and AMP. Plays an important role in cellular energy homeostasis and in adenine nucleotide metabolism. The sequence is that of Adenylate kinase from Actinobacillus succinogenes (strain ATCC 55618 / DSM 22257 / CCUG 43843 / 130Z).